Reading from the N-terminus, the 415-residue chain is Probable cytosolic iron-sulfur protein assembly protein 1 (415 aa).

Residues Ala-9 to Ser-48 form a WD 1 repeat. The segment at Ala-45 to Phe-70 is disordered. Positions Pro-54–Ser-63 are enriched in pro residues. WD repeat units lie at residues Thr-79 to Thr-131, Gly-160 to Glu-200, Asp-207 to Ser-246, Gly-253 to Gly-300, Ile-335 to Glu-374, and Ala-380 to Val-415.

This sequence belongs to the WD repeat CIA1 family. As to quaternary structure, interacts with NAR1.

The protein localises to the cytoplasm. It localises to the nucleus. Functionally, essential component of the cytosolic iron-sulfur (Fe/S) protein assembly machinery. Required for the maturation of extramitochondrial Fe/S proteins. This Lodderomyces elongisporus (strain ATCC 11503 / CBS 2605 / JCM 1781 / NBRC 1676 / NRRL YB-4239) (Yeast) protein is Probable cytosolic iron-sulfur protein assembly protein 1.